Consider the following 569-residue polypeptide: Apical membrane antigen 1 (569 aa).

An N-terminal signal peptide occupies residues 1–48 (MICSIMGGLRSLRAARPYSHQSNTETKHMGLVGVASLLVLVADCTIFA). The propeptide at 49–66 (SGLSSSTRSRESQTLSAS) is removed in mature form; required for microneme targeting of the proprotein. Residues 49–483 (SGLSSSTRSR…DEQNECGSNT (435 aa)) are Extracellular-facing. Residues 67–287 (TSGNPFQANV…NPDAFISKCP (221 aa)) form a DI region. N86 carries N-linked (GlcNAc...) asparagine glycosylation. Cystine bridges form between C117-C286, C194-C226, C242-C255, C304-C393, C324-C384, C435-C459, C447-C471, and C452-C479. The tract at residues 288–415 (NQALRGYRFG…AGSLSEETPN (128 aa)) is DII. The interval 416–487 (FIIPSNPSVT…ECGSNTALIA (72 aa)) is DIII. A helical transmembrane segment spans residues 484–504 (ALIAGLAVGGVLLLALLGGGC). Residues 505-569 (YFAKRLDRNK…ETHVMVEGDY (65 aa)) lie on the Cytoplasmic side of the membrane. A compositionally biased stretch (basic and acidic residues) spans 518-530 (AAHHEHEFQSDRG). The segment at 518 to 548 (AAHHEHEFQSDRGARKKRPSDLMQEAEPSFW) is disordered.

Belongs to the apicomplexan parasites AMA1 family. As to quaternary structure, component of the moving junction (MJ) complex, composed of AMA1, a transmembrane protein on the parasite surface, and a complex of the rhoptry neck proteins RON2, RON4, RON5 and RON8 localized to the cytoplasmic face of the host plasma membrane. Interacts (via ectodomain) with RON2 (via C-terminus); RON2 serves as the receptor for AMA1 on the host plasma membrane. AMA1 and the RON proteins are initially in distinct compartments within the parasite, namely the micronemes and the rhoptries, and interaction happens only upon initiation of invasion when the micronemes and rhoptries discharge. Proteolytically cleaved during invasion within its transmembrane domain, releasing a soluble form from the tachyzoite surface. The cytosolic tail generated by ROM4 cleavage during invasion may trigger parasite replication within the parasitophorous vacuole.

Its subcellular location is the cell membrane. It localises to the secreted. In terms of biological role, essential microneme protein that plays an important role in host cell invasion. Part of the moving junction (MJ) complex, a ringlike structure formed between the plasma membranes of the apical tip of the parasite and the target host cell. During invasion, the MJ migrates from the anterior to the posterior of the parasite, leading to internalization of the parasite into a parasitophorous vacuole (PV). The polypeptide is Apical membrane antigen 1 (AMA1) (Toxoplasma gondii (strain ATCC 50861 / VEG)).